The sequence spans 197 residues: RNA pyrophosphohydrolase (197 aa).

A Nudix hydrolase domain is found at 6–150 (GYRPNVGIVI…KRDVYRKVMR (145 aa)). Residues 38–59 (GGINEGENIETAMYRELYEEVG) carry the Nudix box motif.

The protein belongs to the Nudix hydrolase family. RppH subfamily. The cofactor is a divalent metal cation.

Functionally, accelerates the degradation of transcripts by removing pyrophosphate from the 5'-end of triphosphorylated RNA, leading to a more labile monophosphorylated state that can stimulate subsequent ribonuclease cleavage. The sequence is that of RNA pyrophosphohydrolase from Haemophilus ducreyi (strain 35000HP / ATCC 700724).